The following is a 264-amino-acid chain: Tryptophan synthase alpha chain (264 aa).

Catalysis depends on proton acceptor residues glutamate 45 and aspartate 56.

The protein belongs to the TrpA family. As to quaternary structure, tetramer of two alpha and two beta chains.

The enzyme catalyses (1S,2R)-1-C-(indol-3-yl)glycerol 3-phosphate + L-serine = D-glyceraldehyde 3-phosphate + L-tryptophan + H2O. The protein operates within amino-acid biosynthesis; L-tryptophan biosynthesis; L-tryptophan from chorismate: step 5/5. The alpha subunit is responsible for the aldol cleavage of indoleglycerol phosphate to indole and glyceraldehyde 3-phosphate. The sequence is that of Tryptophan synthase alpha chain from Leptospira borgpetersenii serovar Hardjo-bovis (strain JB197).